The chain runs to 97 residues: MANNKSAKKRIQIAERNRLNNKSYKSTVRTLTKKTLENCEKYKKEPNEDNMNLVKTSLNKAFSLIDKAVKKNVLHKNNGANKKSKINKFVKTALNIK.

The protein belongs to the bacterial ribosomal protein bS20 family.

In terms of biological role, binds directly to 16S ribosomal RNA. This is Small ribosomal subunit protein bS20 from Prochlorococcus marinus (strain MIT 9215).